We begin with the raw amino-acid sequence, 167 residues long: MMGSNYPEHGTKPRSAKYHKQQNHRVVRKQPPRPAVSDRHNIYITSKTDFKAQQRRCEELINSGAHEIFLHCMGFSVTRGLNIALRLVQNSDGALSYAINTSTVQLVDELHPLCDAEDITFRQRNNSALHIKILNNSLFDIAVPQPSQSQTQAQSLGQFRGKAKARQ.

The disordered stretch occupies residues 1–36 (MMGSNYPEHGTKPRSAKYHKQQNHRVVRKQPPRPAV). The segment covering 12 to 31 (KPRSAKYHKQQNHRVVRKQP) has biased composition (basic residues).

Interacts with Smn.

It localises to the nucleus. It is found in the nucleolus. Its subcellular location is the cytoplasm. The protein localises to the cytoplasmic granule. Its function is as follows. Component of ribonuclease P, a protein complex that generates mature tRNA molecules by cleaving their 5'-ends. Also a component of RNase MRP complex, which cleaves pre-rRNA sequences. The sequence is that of Ribonuclease P protein subunit p20 from Drosophila melanogaster (Fruit fly).